A 574-amino-acid polypeptide reads, in one-letter code: Type II methyltransferase M.PaeR7I (574 aa).

This sequence belongs to the N(4)/N(6)-methyltransferase family. Monomer.

The catalysed reaction is a 2'-deoxyadenosine in DNA + S-adenosyl-L-methionine = an N(6)-methyl-2'-deoxyadenosine in DNA + S-adenosyl-L-homocysteine + H(+). A gamma subtype methylase, recognizes the double-stranded sequence 5'-CTCGAG-3', methylates A-5 on both strands, and protects the DNA from cleavage by the PaeR7I endonuclease. This chain is Type II methyltransferase M.PaeR7I (paeR7IM), found in Pseudomonas aeruginosa.